The primary structure comprises 507 residues: ATP synthase subunit alpha, mitochondrial (507 aa).

Glycine 171–threonine 178 provides a ligand contact to ATP.

This sequence belongs to the ATPase alpha/beta chains family. F-type ATPases have 2 components, CF(1) - the catalytic core - and CF(0) - the membrane proton channel. CF(1) has five subunits: alpha(3), beta(3), gamma(1), delta(1), epsilon(1). CF(0) has three main subunits: a, b and c.

Its subcellular location is the mitochondrion. The protein localises to the mitochondrion inner membrane. In terms of biological role, mitochondrial membrane ATP synthase (F(1)F(0) ATP synthase or Complex V) produces ATP from ADP in the presence of a proton gradient across the membrane which is generated by electron transport complexes of the respiratory chain. F-type ATPases consist of two structural domains, F(1) - containing the extramembraneous catalytic core, and F(0) - containing the membrane proton channel, linked together by a central stalk and a peripheral stalk. During catalysis, ATP synthesis in the catalytic domain of F(1) is coupled via a rotary mechanism of the central stalk subunits to proton translocation. Subunits alpha and beta form the catalytic core in F(1). Rotation of the central stalk against the surrounding alpha(3)beta(3) subunits leads to hydrolysis of ATP in three separate catalytic sites on the beta subunits. Subunit alpha does not bear the catalytic high-affinity ATP-binding sites. This is ATP synthase subunit alpha, mitochondrial (ATPA) from Pisum sativum (Garden pea).